A 338-amino-acid polypeptide reads, in one-letter code: Ketol-acid reductoisomerase (NADP(+)) (338 aa).

The KARI N-terminal Rossmann domain maps to 1–181 (MKVFYDKDCD…GGGRAGIIET (181 aa)). NADP(+)-binding positions include 24–27 (YGSQ), R47, and S52. Residue H107 is part of the active site. Residue G133 participates in NADP(+) binding. Residues 182-327 (NFREETETDL…GKLRAMMPWI (146 aa)) form the KARI C-terminal knotted domain. Mg(2+)-binding residues include D190, E194, E226, and E230. S251 serves as a coordination point for substrate.

This sequence belongs to the ketol-acid reductoisomerase family. It depends on Mg(2+) as a cofactor.

The catalysed reaction is (2R)-2,3-dihydroxy-3-methylbutanoate + NADP(+) = (2S)-2-acetolactate + NADPH + H(+). The enzyme catalyses (2R,3R)-2,3-dihydroxy-3-methylpentanoate + NADP(+) = (S)-2-ethyl-2-hydroxy-3-oxobutanoate + NADPH + H(+). It functions in the pathway amino-acid biosynthesis; L-isoleucine biosynthesis; L-isoleucine from 2-oxobutanoate: step 2/4. It participates in amino-acid biosynthesis; L-valine biosynthesis; L-valine from pyruvate: step 2/4. Functionally, involved in the biosynthesis of branched-chain amino acids (BCAA). Catalyzes an alkyl-migration followed by a ketol-acid reduction of (S)-2-acetolactate (S2AL) to yield (R)-2,3-dihydroxy-isovalerate. In the isomerase reaction, S2AL is rearranged via a Mg-dependent methyl migration to produce 3-hydroxy-3-methyl-2-ketobutyrate (HMKB). In the reductase reaction, this 2-ketoacid undergoes a metal-dependent reduction by NADPH to yield (R)-2,3-dihydroxy-isovalerate. This chain is Ketol-acid reductoisomerase (NADP(+)), found in Bordetella pertussis (strain Tohama I / ATCC BAA-589 / NCTC 13251).